A 127-amino-acid polypeptide reads, in one-letter code: Protein translocase subunit SecE (127 aa).

The next 3 helical transmembrane spans lie at 16–36 (AMKW…NYLY), 41–61 (LPLR…VALL), and 96–116 (IVAA…GILV).

It belongs to the SecE/SEC61-gamma family. Component of the Sec protein translocase complex. Heterotrimer consisting of SecY, SecE and SecG subunits. The heterotrimers can form oligomers, although 1 heterotrimer is thought to be able to translocate proteins. Interacts with the ribosome. Interacts with SecDF, and other proteins may be involved. Interacts with SecA.

The protein localises to the cell inner membrane. In terms of biological role, essential subunit of the Sec protein translocation channel SecYEG. Clamps together the 2 halves of SecY. May contact the channel plug during translocation. The sequence is that of Protein translocase subunit SecE from Salmonella typhi.